Here is a 327-residue protein sequence, read N- to C-terminus: GTPase Obg (327 aa).

An Obg domain is found at 1–159 (MQFIDQANII…WEVQLELKLL (159 aa)). Residues 160-327 (AEVGIIGLPN…PLLSEVWKRI (168 aa)) form the OBG-type G domain. ATP-binding positions include 166–173 (GLPNAGKS), 191–195 (FTTLI), 213–216 (DIPG), 280–283 (NKME), and 309–311 (SSS). Mg(2+)-binding residues include Ser173 and Thr193.

This sequence belongs to the TRAFAC class OBG-HflX-like GTPase superfamily. OBG GTPase family. Monomer. Mg(2+) serves as cofactor.

It is found in the cytoplasm. In terms of biological role, an essential GTPase which binds GTP, GDP and possibly (p)ppGpp with moderate affinity, with high nucleotide exchange rates and a fairly low GTP hydrolysis rate. Plays a role in control of the cell cycle, stress response, ribosome biogenesis and in those bacteria that undergo differentiation, in morphogenesis control. This is GTPase Obg from Prochlorococcus marinus subsp. pastoris (strain CCMP1986 / NIES-2087 / MED4).